Reading from the N-terminus, the 203-residue chain is A-type ATP synthase subunit E (203 aa).

This sequence belongs to the V-ATPase E subunit family. In terms of assembly, has multiple subunits with at least A(3), B(3), C, D, E, F, H, I and proteolipid K(x).

Its subcellular location is the cell membrane. Component of the A-type ATP synthase that produces ATP from ADP in the presence of a proton gradient across the membrane. This chain is A-type ATP synthase subunit E, found in Methanococcus vannielii (strain ATCC 35089 / DSM 1224 / JCM 13029 / OCM 148 / SB).